The sequence spans 471 residues: Glutamate--tRNA ligase (471 aa).

A 'HIGH' region motif is present at residues 9–19; sequence PSPTGYLHVGG. 4 residues coordinate Zn(2+): cysteine 98, cysteine 100, cysteine 125, and histidine 127. Positions 237–241 match the 'KMSKS' region motif; sequence KLSKR. Lysine 240 provides a ligand contact to ATP.

The protein belongs to the class-I aminoacyl-tRNA synthetase family. Glutamate--tRNA ligase type 1 subfamily. Monomer. Requires Zn(2+) as cofactor.

Its subcellular location is the cytoplasm. It carries out the reaction tRNA(Glu) + L-glutamate + ATP = L-glutamyl-tRNA(Glu) + AMP + diphosphate. Catalyzes the attachment of glutamate to tRNA(Glu) in a two-step reaction: glutamate is first activated by ATP to form Glu-AMP and then transferred to the acceptor end of tRNA(Glu). The protein is Glutamate--tRNA ligase of Escherichia coli O6:K15:H31 (strain 536 / UPEC).